Consider the following 233-residue polypeptide: Putative quercetin 2,3-dioxygenase PM1685 (233 aa).

Residues histidine 59, histidine 61, histidine 103, and glutamate 105 each coordinate a divalent metal cation.

It belongs to the pirin family. Requires a divalent metal cation as cofactor.

It catalyses the reaction quercetin + O2 = 2-(3,4-dihydroxybenzoyloxy)-4,6-dihydroxybenzoate + CO. The protein operates within flavonoid metabolism; quercetin degradation. Putative quercetin 2,3-dioxygenase. This is Putative quercetin 2,3-dioxygenase PM1685 from Pasteurella multocida (strain Pm70).